The primary structure comprises 477 residues: Nuclear receptor subfamily 6 group A member 1-A (477 aa).

The segment at residues 40–115 (QRSCLICGDR…MGMNRKAIRE (76 aa)) is a DNA-binding region (nuclear receptor). 2 consecutive NR C4-type zinc fingers follow at residues 43 to 63 (CLICGDRATGLHYGIISCEGC) and 79 to 98 (CSRDKNCEMSRKQRNRCQYC). The interval 147–187 (DEANMPEHTWGNNGDSDHSSPGNGVSDGNQPSPVSTLSSNR) is disordered. Residues 156-187 (WGNNGDSDHSSPGNGVSDGNQPSPVSTLSSNR) show a composition bias toward polar residues. One can recognise an NR LBD domain in the interval 230–461 (QSHTLIGQLV…HSCKSSLSSY (232 aa)).

This sequence belongs to the nuclear hormone receptor family. NR6 subfamily. In terms of assembly, homodimer. Expressed in germ cells, being predominant in previtellogenic oocytes in the ovary and in spermatocytes in the testis.

The protein localises to the nucleus. Its function is as follows. Probable orphan nuclear receptor. Binds to a response element containing repeats of the motif 5'-AGGTCA-3'. The protein is Nuclear receptor subfamily 6 group A member 1-A of Danio rerio (Zebrafish).